A 117-amino-acid polypeptide reads, in one-letter code: Urease subunit beta (117 aa).

A disordered region spans residues 95 to 117; the sequence is NAVNGKLDGGPHPGVPATERGAK.

The protein belongs to the urease beta subunit family. In terms of assembly, heterotrimer of UreA (gamma), UreB (beta) and UreC (alpha) subunits. Three heterotrimers associate to form the active enzyme.

It localises to the cytoplasm. The catalysed reaction is urea + 2 H2O + H(+) = hydrogencarbonate + 2 NH4(+). The protein operates within nitrogen metabolism; urea degradation; CO(2) and NH(3) from urea (urease route): step 1/1. This Pseudarthrobacter chlorophenolicus (strain ATCC 700700 / DSM 12829 / CIP 107037 / JCM 12360 / KCTC 9906 / NCIMB 13794 / A6) (Arthrobacter chlorophenolicus) protein is Urease subunit beta.